The sequence spans 210 residues: Redox-sensing transcriptional repressor Rex (210 aa).

A DNA-binding region (H-T-H motif) is located at residues 17–56; the sequence is KYYRYLAELMDNDVDRISSKELSEKIGFTASQIRQDLNNF. Residue 91-96 participates in NAD(+) binding; sequence GAGNIG.

The protein belongs to the transcriptional regulatory Rex family. In terms of assembly, homodimer.

Its subcellular location is the cytoplasm. Functionally, modulates transcription in response to changes in cellular NADH/NAD(+) redox state. In Clostridium novyi (strain NT), this protein is Redox-sensing transcriptional repressor Rex.